We begin with the raw amino-acid sequence, 558 residues long: Potassium-transporting ATPase potassium-binding subunit (558 aa).

11 helical membrane passes run 1–21 (MDTLAGILQVASVVLVLVLIH), 59–79 (PAYLRAVLAFSLVGVLVVYGL), 85–105 (FLPYALGLPAVPEGLSFNTAV), 130–150 (GLAVQNFVSAAVGIAVAIALV), 179–199 (LSLVTAVILIAGGVIQNFAGF), 245–265 (PTAWTSAFQVILMLAIPFSLP), 279–299 (TAIVAVMATIFVVSFTALTIF), 374–394 (GLYGMLILAVISVFVAGLLVG), 416–436 (ILVTPILVLVGTALSFAIPAV), 484–504 (ALGVAMLLGRFLPIVFVLALA), and 527–547 (FVGLLIGVTVIVTALTYFPVL).

The protein belongs to the KdpA family. As to quaternary structure, the system is composed of three essential subunits: KdpA, KdpB and KdpC.

The protein resides in the cell membrane. Functionally, part of the high-affinity ATP-driven potassium transport (or Kdp) system, which catalyzes the hydrolysis of ATP coupled with the electrogenic transport of potassium into the cytoplasm. This subunit binds the extracellular potassium ions and delivers the ions to the membrane domain of KdpB through an intramembrane tunnel. The sequence is that of Potassium-transporting ATPase potassium-binding subunit from Clavibacter michiganensis subsp. michiganensis (strain NCPPB 382).